We begin with the raw amino-acid sequence, 407 residues long: Methylthioribose kinase (407 aa).

ATP is bound by residues asparagine 40, lysine 57, and 111-113; that span reads EDL. Residue aspartate 229 participates in substrate binding. 246 to 248 contacts ATP; the sequence is DAE. Arginine 344 lines the substrate pocket.

It belongs to the methylthioribose kinase family. In terms of assembly, homodimer.

It carries out the reaction 5-(methylsulfanyl)-D-ribose + ATP = 5-(methylsulfanyl)-alpha-D-ribose 1-phosphate + ADP + H(+). Its pathway is amino-acid biosynthesis; L-methionine biosynthesis via salvage pathway; S-methyl-5-thio-alpha-D-ribose 1-phosphate from S-methyl-5'-thioadenosine (hydrolase route): step 2/2. Catalyzes the phosphorylation of methylthioribose into methylthioribose-1-phosphate. The chain is Methylthioribose kinase from Yersinia pseudotuberculosis serotype O:3 (strain YPIII).